The sequence spans 39 residues: PVNEAGVERLFRALVGRGCPADCPNTCDSSNECSPNFPG.

Positions 1–16 (PVNEAGVERLFRALVG) are excised as a propeptide. Pro38 carries the proline amide modification.

Contains 2 disulfide bonds. Expressed by the venom duct.

The protein resides in the secreted. The chain is Conotoxin Cl14.5 from Californiconus californicus (California cone).